A 260-amino-acid chain; its full sequence is Carbonic anhydrase 3 (260 aa).

Ala-2 is subject to N-acetylalanine. An Alpha-carbonic anhydrase domain is found at 3–259; sequence KEWGYADHNG…IKGRIVKASF (257 aa). Residues Ser-29, Ser-43, Ser-50, and Ser-55 each carry the phosphoserine modification. Positions 64 to 67 are involved in proton transfer; sequence KTCR. Thr-73 is subject to Phosphothreonine. Zn(2+) contacts are provided by His-94, His-96, and His-119. Tyr-127 is modified (phosphotyrosine). Cys-182 and Cys-187 each carry S-glutathionyl cysteine. Residue 198–199 coordinates substrate; sequence TT. Phosphothreonine is present on Thr-216. Position 219 is a phosphoserine (Ser-219).

Belongs to the alpha-carbonic anhydrase family. The cofactor is Zn(2+). In terms of processing, S-thiolated both by thiol-disulfide exchange with glutathione disulfide and by oxyradical-initiated S-thiolation with reduced glutathione. Post-translationally, S-glutathionylated in hepatocytes under oxidative stress.

It localises to the cytoplasm. The catalysed reaction is hydrogencarbonate + H(+) = CO2 + H2O. With respect to regulation, inhibited by acetazolamide. Reversible hydration of carbon dioxide. In Bos taurus (Bovine), this protein is Carbonic anhydrase 3 (CA3).